A 299-amino-acid chain; its full sequence is Glycine--tRNA ligase alpha subunit (299 aa).

It belongs to the class-II aminoacyl-tRNA synthetase family. As to quaternary structure, tetramer of two alpha and two beta subunits.

Its subcellular location is the cytoplasm. The enzyme catalyses tRNA(Gly) + glycine + ATP = glycyl-tRNA(Gly) + AMP + diphosphate. The polypeptide is Glycine--tRNA ligase alpha subunit (Lactiplantibacillus plantarum (strain ATCC BAA-793 / NCIMB 8826 / WCFS1) (Lactobacillus plantarum)).